Reading from the N-terminus, the 92-residue chain is Small ribosomal subunit protein uS19c (92 aa).

Belongs to the universal ribosomal protein uS19 family.

The protein localises to the plastid. The protein resides in the chloroplast. Its function is as follows. Protein S19 forms a complex with S13 that binds strongly to the 16S ribosomal RNA. The sequence is that of Small ribosomal subunit protein uS19c (rps19) from Trieres chinensis (Marine centric diatom).